Here is a 397-residue protein sequence, read N- to C-terminus: MNIHEYQAKALLKGYGAPVAEGVAILKAEEAEAAAKSLPGPLYVVKSQIHAGGRGKGKFKELSPEAKGGVRLAKSIEDVVANAKEMLGNTLVTAQTGEAGKQVNRLYIEDGADIDRELYCSLLVDRSVGKVAFVVSTEGGMDIEAVAHDTPEKIQTIAIDPETGVTAADVAKISAALKLEGAAAEDAKSLFPLLYRAFNEKDMSLLEINPLIVMKNGHLRVLDAKMSFDGNALFRHDDVRALRDETEEDAKEIEASKWDLAYVALDGNIGCMVNGAGLAMATMDIIKLYGKEPANFCDVGGGAGKEKVAAAFKIITADPKVEGILVNIFGGIMKCDVIAEGVIAAVKEVGLKVPLVVRLEGTNVELGKKILNESGLAITAADDLDDAAKKIVAAING.

An ATP-grasp domain is found at 9 to 254 (KALLKGYGAP…ETEEDAKEIE (246 aa)). ATP-binding positions include Lys46, 53 to 55 (GRG), Glu109, Ala112, and Glu117. Mg(2+)-binding residues include Asn209 and Asp223. Residues Asn274 and 331 to 333 (GIM) contribute to the substrate site.

The protein belongs to the succinate/malate CoA ligase beta subunit family. In terms of assembly, heterotetramer of two alpha and two beta subunits. It depends on Mg(2+) as a cofactor.

The catalysed reaction is succinate + ATP + CoA = succinyl-CoA + ADP + phosphate. It carries out the reaction GTP + succinate + CoA = succinyl-CoA + GDP + phosphate. Its pathway is carbohydrate metabolism; tricarboxylic acid cycle; succinate from succinyl-CoA (ligase route): step 1/1. In terms of biological role, succinyl-CoA synthetase functions in the citric acid cycle (TCA), coupling the hydrolysis of succinyl-CoA to the synthesis of either ATP or GTP and thus represents the only step of substrate-level phosphorylation in the TCA. The beta subunit provides nucleotide specificity of the enzyme and binds the substrate succinate, while the binding sites for coenzyme A and phosphate are found in the alpha subunit. In Rhizobium etli (strain ATCC 51251 / DSM 11541 / JCM 21823 / NBRC 15573 / CFN 42), this protein is Succinate--CoA ligase [ADP-forming] subunit beta.